Here is a 131-residue protein sequence, read N- to C-terminus: Small ribosomal subunit protein uS11 (131 aa).

Basic residues predominate over residues 1–15 (MAAQKVKKTRRRKER). The disordered stretch occupies residues 1-23 (MAAQKVKKTRRRKERKNVEHGAA).

The protein belongs to the universal ribosomal protein uS11 family. Part of the 30S ribosomal subunit. Interacts with proteins S7 and S18. Binds to IF-3.

In terms of biological role, located on the platform of the 30S subunit, it bridges several disparate RNA helices of the 16S rRNA. Forms part of the Shine-Dalgarno cleft in the 70S ribosome. In Clostridium perfringens (strain 13 / Type A), this protein is Small ribosomal subunit protein uS11.